A 234-amino-acid chain; its full sequence is Phosphoribosylaminoimidazole-succinocarboxamide synthase (234 aa).

It belongs to the SAICAR synthetase family.

The enzyme catalyses 5-amino-1-(5-phospho-D-ribosyl)imidazole-4-carboxylate + L-aspartate + ATP = (2S)-2-[5-amino-1-(5-phospho-beta-D-ribosyl)imidazole-4-carboxamido]succinate + ADP + phosphate + 2 H(+). It functions in the pathway purine metabolism; IMP biosynthesis via de novo pathway; 5-amino-1-(5-phospho-D-ribosyl)imidazole-4-carboxamide from 5-amino-1-(5-phospho-D-ribosyl)imidazole-4-carboxylate: step 1/2. This chain is Phosphoribosylaminoimidazole-succinocarboxamide synthase, found in Staphylococcus aureus (strain MRSA252).